The chain runs to 470 residues: MDGDISTGKMASPACAMAPLDSMEVLDLLFDGQDGILRNVDLAESWILTREEQKVLPNSDSDEFLNSILGPGDSDPSSPIWSPADSDSGISEDLPSDSQDTPPGSGPGSANVAARCHPSKQGEGPCPSYLPSTACPEPPRTQVHESSVAIDLDMWSTDTLYPEEQAGSPSRFNLTVKELLLSGGGGDLQQHPLAASQLLGPGSGHCQELVLTEDEKKLLAKEGVTLPTQLPLTKYEERVLKKIRRKIRNKQSAQESRKKKKEYIDGLENRMSACTAQNQELQRKVLHLEKQNLSLLEQLKHLQALVVQSTSKPAHAGTCIAVLLLSFVLIILPSISPFTANKVDSPGDFIPVRVFSRTLHNHAASRVAPDVTPGPEVPGPHKGSSGGLSADWGNFLEIPMLDDPTEELDNTTLVLANSTEDLGRATLLDWVASEPLLGQMGLEIPGEEIWLSWVPRWLRVRVVQDALGVL.

Residues 1–319 (MDGDISTGKM…TSKPAHAGTC (319 aa)) lie on the Cytoplasmic side of the membrane. A disordered region spans residues 59–145 (SDSDEFLNSI…PEPPRTQVHE (87 aa)). One can recognise a bZIP domain in the interval 239–302 (VLKKIRRKIR…LSLLEQLKHL (64 aa)). The segment at 241–270 (KKIRRKIRNKQSAQESRKKKKEYIDGLENR) is basic motif. Positions 281-302 (LQRKVLHLEKQNLSLLEQLKHL) are leucine-zipper. Residue lysine 290 forms a Glycyl lysine isopeptide (Lys-Gly) (interchain with G-Cter in ubiquitin) linkage. The helical; Signal-anchor for type II membrane protein transmembrane segment at 320-340 (IAVLLLSFVLIILPSISPFTA) threads the bilayer. Topologically, residues 341 to 470 (NKVDSPGDFI…RVVQDALGVL (130 aa)) are lumenal. N-linked (GlcNAc...) asparagine glycans are attached at residues asparagine 410 and asparagine 417.

This sequence belongs to the bZIP family. ATF subfamily. Binds DNA as a dimer. May form homodimers. Interacts with ATF6. Interacts with SYNV1/HRD1; this interaction leads to CREB3L3 ubiquitination and proteasomal degradation. Post-translationally, controlled by regulated intramembrane proteolysis (RIP). Following ER stress a fragment containing the cytoplasmic transcription factor domain is released by proteolysis. The cleavage seems to be performed sequentially by site-1 and site-2 proteases (PS1 and PS2). In terms of processing, N-glycosylation is required for optimal proteolytic activation. Ubiquitinated at Lys-290 by SYNV1/HRD1 via 'Lys-27'-linked ubiquitin.

It is found in the endoplasmic reticulum membrane. The protein localises to the nucleus. In terms of biological role, transcription factor that may act during endoplasmic reticulum stress by activating unfolded protein response target genes. Activated in response to cAMP stimulation. Binds the cAMP response element (CRE). Activates transcription through box-B element and CRE. Seems to function synergistically with ATF6. In acute inflammatory response, may activate expression of acute phase response (APR) genes. May be involved in growth suppression. Regulates FGF21 transcription. Plays a crucial role in the regulation of triglyceride metabolism and is required for the maintenance of normal plasma triglyceride concentrations. In Rattus norvegicus (Rat), this protein is Cyclic AMP-responsive element-binding protein 3-like protein 3 (Creb3l3).